Reading from the N-terminus, the 308-residue chain is 15-cis-phytoene synthase (308 aa).

It belongs to the phytoene/squalene synthase family. The cofactor is ATP. Requires Mn(2+) as cofactor. Mg(2+) is required as a cofactor.

It catalyses the reaction 2 (2E,6E,10E)-geranylgeranyl diphosphate = 15-cis-phytoene + 2 diphosphate. The protein operates within carotenoid biosynthesis; phytoene biosynthesis. Involved in the biosynthesis of carotenoids. Catalyzes the condensation of two molecules of geranylgeranyl diphosphate (GGPP) to give prephytoene diphosphate (PPPP) and the subsequent rearrangement of the cyclopropylcarbinyl intermediate to yield 15-cis-phytoene. This chain is 15-cis-phytoene synthase (crtB), found in Synechococcus elongatus (strain ATCC 33912 / PCC 7942 / FACHB-805) (Anacystis nidulans R2).